We begin with the raw amino-acid sequence, 205 residues long: Holliday junction branch migration complex subunit RuvA (205 aa).

The tract at residues 1 to 64 (MIGHIQGVLT…EDAQLLYGFI (64 aa)) is domain I. The segment at 65–143 (SASERSLFRL…DWQPSTPFTD (79 aa)) is domain II. The interval 136 to 157 (QPSTPFTDRAPLDSQGMDAREH) is disordered. The interval 144-156 (RAPLDSQGMDARE) is flexible linker. The interval 157–205 (HPADARTDAISALQSLGYKENQAEKALQKVYSAEHNSETLIRLALKQLS) is domain III.

It belongs to the RuvA family. Homotetramer. Forms an RuvA(8)-RuvB(12)-Holliday junction (HJ) complex. HJ DNA is sandwiched between 2 RuvA tetramers; dsDNA enters through RuvA and exits via RuvB. An RuvB hexamer assembles on each DNA strand where it exits the tetramer. Each RuvB hexamer is contacted by two RuvA subunits (via domain III) on 2 adjacent RuvB subunits; this complex drives branch migration. In the full resolvosome a probable DNA-RuvA(4)-RuvB(12)-RuvC(2) complex forms which resolves the HJ.

The protein localises to the cytoplasm. The RuvA-RuvB-RuvC complex processes Holliday junction (HJ) DNA during genetic recombination and DNA repair, while the RuvA-RuvB complex plays an important role in the rescue of blocked DNA replication forks via replication fork reversal (RFR). RuvA specifically binds to HJ cruciform DNA, conferring on it an open structure. The RuvB hexamer acts as an ATP-dependent pump, pulling dsDNA into and through the RuvAB complex. HJ branch migration allows RuvC to scan DNA until it finds its consensus sequence, where it cleaves and resolves the cruciform DNA. The polypeptide is Holliday junction branch migration complex subunit RuvA (Idiomarina loihiensis (strain ATCC BAA-735 / DSM 15497 / L2-TR)).